A 126-amino-acid chain; its full sequence is Large ribosomal subunit protein bL12 (126 aa).

The protein belongs to the bacterial ribosomal protein bL12 family. As to quaternary structure, homodimer. Part of the ribosomal stalk of the 50S ribosomal subunit. Forms a multimeric L10(L12)X complex, where L10 forms an elongated spine to which 2 to 4 L12 dimers bind in a sequential fashion. Binds GTP-bound translation factors.

Its function is as follows. Forms part of the ribosomal stalk which helps the ribosome interact with GTP-bound translation factors. Is thus essential for accurate translation. This Bifidobacterium longum subsp. infantis (strain ATCC 15697 / DSM 20088 / JCM 1222 / NCTC 11817 / S12) protein is Large ribosomal subunit protein bL12.